The primary structure comprises 416 residues: 2-aminoadipate transaminase (416 aa).

Pyridoxal 5'-phosphate-binding positions include G102–A103 and Q233. Residue K259 is modified to N6-(pyridoxal phosphate)lysine. T288 contributes to the pyridoxal 5'-phosphate binding site.

The protein belongs to the class-III pyridoxal-phosphate-dependent aminotransferase family. Pyridoxal 5'-phosphate serves as cofactor.

The enzyme catalyses L-2-aminoadipate + 2-oxoglutarate = 2-oxoadipate + L-glutamate. It catalyses the reaction 5-aminopentanoate + 2-oxoglutarate = 5-oxopentanoate + L-glutamate. It functions in the pathway amino-acid degradation. Functionally, catalyzes the conversion of 2-aminoadipate (2AA) to 2-oxoadipate (2OA). Is most active on L-2-aminoadipate (L-2AA) and shows only weak activity on the enantiomer, D-2-aminoadipate (D-2AA). Shows moderate activity on 5-aminovalerate (5AVA) and weak activity toward 4-aminobutyrate (GABA). Is involved in a D-lysine catabolic pathway. The chain is 2-aminoadipate transaminase from Pseudomonas putida (strain ATCC 47054 / DSM 6125 / CFBP 8728 / NCIMB 11950 / KT2440).